The primary structure comprises 317 residues: NADH-quinone oxidoreductase subunit H 1 (317 aa).

The next 8 helical transmembrane spans lie at 7–27, 74–94, 107–127, 147–167, 179–199, 230–250, 257–277, and 297–317; these read IWVN…MLSW, AVFV…FAVV, IGVL…VLGG, LSYE…AGSF, LWFC…GIAE, FFIG…TLFF, VLPP…CFVL, and VMLP…LSVA.

It belongs to the complex I subunit 1 family. NDH-1 is composed of 14 different subunits. Subunits NuoA, H, J, K, L, M, N constitute the membrane sector of the complex.

The protein resides in the cell inner membrane. It catalyses the reaction a quinone + NADH + 5 H(+)(in) = a quinol + NAD(+) + 4 H(+)(out). Its function is as follows. NDH-1 shuttles electrons from NADH, via FMN and iron-sulfur (Fe-S) centers, to quinones in the respiratory chain. The immediate electron acceptor for the enzyme in this species is believed to be ubiquinone. Couples the redox reaction to proton translocation (for every two electrons transferred, four hydrogen ions are translocated across the cytoplasmic membrane), and thus conserves the redox energy in a proton gradient. This subunit may bind ubiquinone. The polypeptide is NADH-quinone oxidoreductase subunit H 1 (Nitrosospira multiformis (strain ATCC 25196 / NCIMB 11849 / C 71)).